We begin with the raw amino-acid sequence, 194 residues long: Small ribosomal subunit protein uS4c (194 aa).

The region spanning 84 to 144 (MRLDTLLYRT…KEILKSLNDK (61 aa)) is the S4 RNA-binding domain.

The protein belongs to the universal ribosomal protein uS4 family. As to quaternary structure, part of the 30S ribosomal subunit. Contacts protein S5. The interaction surface between S4 and S5 is involved in control of translational fidelity.

The protein localises to the plastid. The protein resides in the chloroplast. Its function is as follows. One of the primary rRNA binding proteins, it binds directly to 16S rRNA where it nucleates assembly of the body of the 30S subunit. In terms of biological role, with S5 and S12 plays an important role in translational accuracy. The chain is Small ribosomal subunit protein uS4c (rps4) from Bigelowiella natans (Pedinomonas minutissima).